We begin with the raw amino-acid sequence, 443 residues long: MTTLNAKLASQYPAHIAQLQQMTKSVLSRENLEGLVIHSGQEVKAFLDDNCYPFKVNPHFKYWLPLIDIPNSWLVVNGEDKPTLIYYQPVDFWHKVTPLAESYWGEFFNIKILTKASEVDKLLPYDKKGFAYIGSHIEVATALGFEAINPEPLLNYVHYHRGYKSKYEHECLRQSNALAVKAHQAARNAFLQGDSEYDIQQAYLKSIGYGTNDTPYGNIVALNKNCSILHYMSLDKMTPQVHQSFLIDAGANFNGYSADITRTYSYKNDKFAELIARMDQLMLNAVAGLKPGVSYVDLHIETHRAIGQVLRDFNFINVDADTAVESGIISTFFPHGLGHHLGLQVHDVGGFMADERGTHVNTPAEHPFLRTSRVIETNQVFTIEPGLYFIDSLLADLKASANADQVNWQNVDEMRCFGGIRIEDNIIVHQSHNENMTRDLGLS.

Residues D248, D259, H339, E384, and E423 each contribute to the Mn(2+) site.

This sequence belongs to the peptidase M24B family. Bacterial-type prolidase subfamily. Mn(2+) serves as cofactor.

It catalyses the reaction Xaa-L-Pro dipeptide + H2O = an L-alpha-amino acid + L-proline. Functionally, splits dipeptides with a prolyl residue in the C-terminal position. The chain is Xaa-Pro dipeptidase from Colwellia psychrerythraea (strain 34H / ATCC BAA-681) (Vibrio psychroerythus).